The sequence spans 487 residues: Betaine aldehyde dehydrogenase (487 aa).

Ser-26 and Asp-93 together coordinate K(+). Gly-150–Trp-152 is a binding site for NAD(+). The Charge relay system role is filled by Lys-162. NAD(+)-binding positions include Lys-176–Glu-179 and Ser-229–Thr-232. Leu-244 contributes to the K(+) binding site. The Proton acceptor role is filled by Glu-250. 3 residues coordinate NAD(+): Gly-252, Cys-284, and Glu-384. The Nucleophile role is filled by Cys-284. At Cys-284 the chain carries Cysteine sulfenic acid (-SOH). K(+) is bound by residues Lys-454 and Gly-457. The active-site Charge relay system is the Glu-461.

This sequence belongs to the aldehyde dehydrogenase family. As to quaternary structure, dimer of dimers. The cofactor is K(+).

It catalyses the reaction betaine aldehyde + NAD(+) + H2O = glycine betaine + NADH + 2 H(+). It participates in amine and polyamine biosynthesis; betaine biosynthesis via choline pathway; betaine from betaine aldehyde: step 1/1. Functionally, involved in the biosynthesis of the osmoprotectant glycine betaine. Catalyzes the irreversible oxidation of betaine aldehyde to the corresponding acid. The sequence is that of Betaine aldehyde dehydrogenase from Rhizobium leguminosarum bv. trifolii (strain WSM2304).